The primary structure comprises 333 residues: Photosystem II assembly lipoprotein Ycf48 (333 aa).

Positions 1-23 are cleaved as a signal peptide; the sequence is MKRLLNSATQLLLVLVLGISLSG. Cys-24 is lipidated: N-palmitoyl cysteine. A lipid anchor (S-diacylglycerol cysteine) is attached at Cys-24.

This sequence belongs to the Ycf48 family. Part of early PSII assembly complexes which includes D1 (psbA) and PsbI; not found in mature PSII. Binds to the lumenal side of PSII complexes. Interacts with YidC.

Its subcellular location is the cellular thylakoid membrane. Its function is as follows. A factor required for optimal assembly of photosystem II (PSII), acting in the early stages of PSII assembly. Also plays a role in replacement of photodamaged D1 (psbA). Assists YidC in synthesis of chlorophyll-binding proteins. This is Photosystem II assembly lipoprotein Ycf48 from Synechococcus sp. (strain CC9605).